The sequence spans 213 residues: Small ribosomal subunit protein uS4 (213 aa).

An S4 RNA-binding domain is found at 97-165 (RRLDNVVYRM…AKEQLRIKNA (69 aa)).

This sequence belongs to the universal ribosomal protein uS4 family. Part of the 30S ribosomal subunit. Contacts protein S5. The interaction surface between S4 and S5 is involved in control of translational fidelity.

Functionally, one of the primary rRNA binding proteins, it binds directly to 16S rRNA where it nucleates assembly of the body of the 30S subunit. Its function is as follows. With S5 and S12 plays an important role in translational accuracy. In Psychrobacter sp. (strain PRwf-1), this protein is Small ribosomal subunit protein uS4.